A 190-amino-acid polypeptide reads, in one-letter code: Class III hydrophobin F (190 aa).

The signal sequence occupies residues 1-18 (MRPITILCTLATLSTTLA). 4 disulfides stabilise this stretch: cysteine 54/cysteine 115, cysteine 62/cysteine 109, cysteine 63/cysteine 97, and cysteine 116/cysteine 131.

This sequence belongs to the fungal hydrophobin family. Self-assembles to form functional amyloid fibrils called rodlets. Self-assembly into fibrillar rodlets occurs spontaneously at hydrophobic:hydrophilic interfaces and the rodlets further associate laterally to form amphipathic monolayers.

The protein resides in the secreted. It localises to the cell wall. Its function is as follows. Aerial growth, conidiation, and dispersal of filamentous fungi in the environment rely upon a capability of their secreting small amphipathic proteins called hydrophobins (HPBs) with low sequence identity. Class I can self-assemble into an outermost layer of rodlet bundles on aerial cell surfaces, conferring cellular hydrophobicity that supports fungal growth, development and dispersal; whereas Class II form highly ordered films at water-air interfaces through intermolecular interactions but contribute nothing to the rodlet structure. RodF and rodG belong to Class III, which contains hydrophobins with intermediate (between classes I and II) or atypical characteristics. RodF, unlike rodA, is not required for rodlet formation. The chain is Class III hydrophobin F from Aspergillus fumigatus (strain ATCC MYA-4609 / CBS 101355 / FGSC A1100 / Af293) (Neosartorya fumigata).